The chain runs to 396 residues: Arginine biosynthesis bifunctional protein ArgJ (396 aa).

Substrate contacts are provided by Thr-150, Lys-177, Thr-188, Glu-267, Asn-391, and Thr-396. The Nucleophile role is filled by Thr-188.

The protein belongs to the ArgJ family. In terms of assembly, heterotetramer of two alpha and two beta chains.

It is found in the cytoplasm. It carries out the reaction N(2)-acetyl-L-ornithine + L-glutamate = N-acetyl-L-glutamate + L-ornithine. It catalyses the reaction L-glutamate + acetyl-CoA = N-acetyl-L-glutamate + CoA + H(+). It participates in amino-acid biosynthesis; L-arginine biosynthesis; L-ornithine and N-acetyl-L-glutamate from L-glutamate and N(2)-acetyl-L-ornithine (cyclic): step 1/1. The protein operates within amino-acid biosynthesis; L-arginine biosynthesis; N(2)-acetyl-L-ornithine from L-glutamate: step 1/4. In terms of biological role, catalyzes two activities which are involved in the cyclic version of arginine biosynthesis: the synthesis of N-acetylglutamate from glutamate and acetyl-CoA as the acetyl donor, and of ornithine by transacetylation between N(2)-acetylornithine and glutamate. This is Arginine biosynthesis bifunctional protein ArgJ from Wolinella succinogenes (strain ATCC 29543 / DSM 1740 / CCUG 13145 / JCM 31913 / LMG 7466 / NCTC 11488 / FDC 602W) (Vibrio succinogenes).